Reading from the N-terminus, the 115-residue chain is Viral Lymphotactin (115 aa).

Residues 1–19 (MRLLTILALCCVAIWVVES) form the signal peptide. A disulfide bridge connects residues Cys-30 and Cys-67.

The protein belongs to the intercrine gamma family. As to quaternary structure, interacts with host XCR1. N-glycosylated and O-glycosylated.

It localises to the secreted. Chemoattractant for CD4-dendritic cells, but not for CD4+ dendritic cells, T-cells or B-cells. This is Viral Lymphotactin (vXCL1) from Rat cytomegalovirus (isolate England) (RCMV-E).